The chain runs to 308 residues: Probable serine/threonine-protein kinase KIN28 homolog (308 aa).

One can recognise a Protein kinase domain in the interval 4–294; the sequence is YIRERRLGEG…CDDAIKHPYF (291 aa). ATP-binding positions include 10–18 and lysine 46; that span reads LGEGTYAVI. Aspartate 139 serves as the catalytic Proton acceptor.

This sequence belongs to the protein kinase superfamily. CMGC Ser/Thr protein kinase family. CDC2/CDKX subfamily. In terms of assembly, component of the TFIIH holo complex.

Its subcellular location is the nucleus. The catalysed reaction is [DNA-directed RNA polymerase] + ATP = phospho-[DNA-directed RNA polymerase] + ADP + H(+). Protein kinase component of transcription factor IIH (TFIIH) which phosphorylates the C-terminal domain of RNA polymerase II during transition from transcription to elongation after preinitiation complex (PIC) formation, thereby positively regulating transcription. Essential for both basal and activated transcription, and is involved in nucleotide excision repair (NER) of damaged DNA. This is Probable serine/threonine-protein kinase KIN28 homolog (KIN28) from Encephalitozoon cuniculi (strain GB-M1) (Microsporidian parasite).